We begin with the raw amino-acid sequence, 567 residues long: MSIISRQAYADMFGPTTGDRVRLADTELWLEVEKDFTIYGDEVKFGGGKVIRDGQGQGQALSRDCLDLVITNALIIDHWGIVKADIGVKNGRIAGIGKAGNPDVQPGVTLVIGPGTEVIAGEGSIVTAGGIDSHIHFICPQQIDEALCSGVTTMLGGGTGPATGTNATTCTPGPWYMARMLEAAESLPMNLGFLGKGNASLPDALHEQVAAGAIGLKLHEDWGSTPASINNCLNVAEETDTQVAIHTDTLNESGFVEDTLAAIGDRTIHTYHTEGAGGGHAPDIIRACGLANVLPSSTNPTRPYTVNTVDEHLDMLMVCHHLDPAIPEDVAFAESRIRRETIAAEDILHDLGAFSMISSDSQAMGRVGEVITRTWQTAHKMKVQRGSLGSDPARHDNTRIKRYIAKYTINPALAHGISHEVGSIEPGKLADLVLWRPAFFGVKPSMILKGGMIAAAPMGDANASIPTPQPVHFRPMFGALGRAMHSTRMTFLSGLAIRSGLPAQLGLNSLIGEVKNCRSVKKAHMIHNDWQPLIEVDSQTYQVRANGELLTCEPAAVLPMAQRYFLF.

The region spanning 129-567 is the Urease domain; the sequence is GGIDSHIHFI…LPMAQRYFLF (439 aa). Ni(2+) contacts are provided by H134, H136, and K217. Position 217 is an N6-carboxylysine (K217). Substrate is bound at residue H219. Residues H246 and H272 each contribute to the Ni(2+) site. Catalysis depends on H320, which acts as the Proton donor. D360 provides a ligand contact to Ni(2+).

The protein belongs to the metallo-dependent hydrolases superfamily. Urease alpha subunit family. Heterotrimer of UreA (gamma), UreB (beta) and UreC (alpha) subunits. Three heterotrimers associate to form the active enzyme. Ni cation serves as cofactor. Post-translationally, carboxylation allows a single lysine to coordinate two nickel ions.

It localises to the cytoplasm. The enzyme catalyses urea + 2 H2O + H(+) = hydrogencarbonate + 2 NH4(+). The protein operates within nitrogen metabolism; urea degradation; CO(2) and NH(3) from urea (urease route): step 1/1. The sequence is that of Urease subunit alpha from Tolumonas auensis (strain DSM 9187 / NBRC 110442 / TA 4).